Reading from the N-terminus, the 105-residue chain is Small ribosomal subunit protein uS10 (105 aa).

The protein belongs to the universal ribosomal protein uS10 family. As to quaternary structure, part of the 30S ribosomal subunit.

In terms of biological role, involved in the binding of tRNA to the ribosomes. In Acaryochloris marina (strain MBIC 11017), this protein is Small ribosomal subunit protein uS10.